The sequence spans 234 residues: Nuclear transcription factor Y subunit C-1 (234 aa).

2 disordered regions span residues 1–20 (MDTNNQQPPPSAAGIPPPPP) and 205–234 (SVWQTSTGTGDDVSYGSGGSSGQGNLDGQG). Over residues 7-20 (QPPPSAAGIPPPPP) the composition is skewed to pro residues. Positions 209–219 (TSTGTGDDVSY) are enriched in low complexity. Gly residues predominate over residues 220-234 (GSGGSSGQGNLDGQG).

Belongs to the NFYC/HAP5 subunit family. Heterotrimeric transcription factor composed of three components, NF-YA, NF-YB and NF-YC. NF-YB and NF-YC must interact and dimerize for NF-YA association and DNA binding. In terms of tissue distribution, ubiquitous. Present in etiolated seedlings.

It localises to the nucleus. Stimulates the transcription of various genes by recognizing and binding to a CCAAT motif in promoters. This chain is Nuclear transcription factor Y subunit C-1 (NFYC1), found in Arabidopsis thaliana (Mouse-ear cress).